The chain runs to 100 residues: Integration host factor subunit alpha (100 aa).

It belongs to the bacterial histone-like protein family. As to quaternary structure, heterodimer of an alpha and a beta chain.

Its function is as follows. This protein is one of the two subunits of integration host factor, a specific DNA-binding protein that functions in genetic recombination as well as in transcriptional and translational control. The chain is Integration host factor subunit alpha from Buchnera aphidicola subsp. Schizaphis graminum (strain Sg).